The sequence spans 49 residues: Delta-actitoxin-Axm1h (49 aa).

3 cysteine pairs are disulfide-bonded: Cys-4-Cys-46, Cys-6-Cys-36, and Cys-29-Cys-47.

This sequence belongs to the sea anemone sodium channel inhibitory toxin family. Type I subfamily.

The protein resides in the secreted. It is found in the nematocyst. Its function is as follows. Binds specifically to voltage-gated sodium channels (Nav) (site 3), thereby delaying their inactivation during signal transduction. Thus it may strongly stimulate mammalian cardiac muscle contraction. This is Delta-actitoxin-Axm1h from Anthopleura xanthogrammica (Giant green sea anemone).